A 255-amino-acid chain; its full sequence is Leucyl/phenylalanyl-tRNA--protein transferase (255 aa).

The protein belongs to the L/F-transferase family.

Its subcellular location is the cytoplasm. The enzyme catalyses N-terminal L-lysyl-[protein] + L-leucyl-tRNA(Leu) = N-terminal L-leucyl-L-lysyl-[protein] + tRNA(Leu) + H(+). It catalyses the reaction N-terminal L-arginyl-[protein] + L-leucyl-tRNA(Leu) = N-terminal L-leucyl-L-arginyl-[protein] + tRNA(Leu) + H(+). The catalysed reaction is L-phenylalanyl-tRNA(Phe) + an N-terminal L-alpha-aminoacyl-[protein] = an N-terminal L-phenylalanyl-L-alpha-aminoacyl-[protein] + tRNA(Phe). Functions in the N-end rule pathway of protein degradation where it conjugates Leu, Phe and, less efficiently, Met from aminoacyl-tRNAs to the N-termini of proteins containing an N-terminal arginine or lysine. In Burkholderia thailandensis (strain ATCC 700388 / DSM 13276 / CCUG 48851 / CIP 106301 / E264), this protein is Leucyl/phenylalanyl-tRNA--protein transferase.